The sequence spans 547 residues: MAAPPLLSLSQRLLFLSLSLPKPQLAPNPSSFSPTRAASTAPPPPEGAGPAAPSRGDRFLGTQLAAEAAARVLAPEDAERRRRRREKRKALARKPSAAACYGCGAPLQTADEAAPGYVHPATYDLKKRHHQLRTVLCGRCKLLSHGHMITAVGGHGGYPGGKQFVSADQLRDKLSYLRHEKALIIKLVDIVDFNGSFLARVRDFAGANPIILVITKVDLLPRDTDLNCIGDWVVEAVVKKKLNVLSVHLTSSKSLVGVTGVISEIQQEKKGRDVYILGSANVGKSAFISAMLRTMAYKDPVAAAAQKYKPIQSAVPGTTLGPIQIEAFLGGGKLYDTPGVHLHHRQAAVIHADDLPSLAPQSRLRARCFPANDTDVGLSGNSLFWGGLVRIDVVKALPRTRLTFYGPKKLKINMVPTTEADEFYEREVGVTLTPPAGKEKAEGWVGLQGVRELQIKYEESDRPACDIAISGLGWVAVEPLGVPSSNPDESAEEEDNESGELHLRVHVPKPVEIFVRPPLPVGKAASQWYRYQELTEEEEELRPKWHY.

A compositionally biased stretch (low complexity) spans 24–40 (QLAPNPSSFSPTRAAST). Disordered stretches follow at residues 24 to 57 (QLAP…SRGD) and 72 to 91 (VLAP…RKAL). Residues 81–91 (RRRRREKRKAL) show a composition bias toward basic residues. One can recognise a CP-type G domain in the interval 167–343 (ADQLRDKLSY…LYDTPGVHLH (177 aa)).

It belongs to the TRAFAC class YlqF/YawG GTPase family. NOA1 subfamily.

It carries out the reaction 2 L-arginine + 3 NADPH + 4 O2 + H(+) = 2 L-citrulline + 2 nitric oxide + 3 NADP(+) + 4 H2O. Produces nitric oxide (NO) which is a messenger molecule involved in hormonal signaling and defense responses in plant. This chain is Putative nitric oxide synthase, found in Oryza sativa subsp. japonica (Rice).